The chain runs to 168 residues: Cytochrome c-type biogenesis protein CcmE (168 aa).

Residues 1-23 are Cytoplasmic-facing; it reads MTTAPSGLPGTPLPPARRRERPR. The chain crosses the membrane as a helical; Signal-anchor for type II membrane protein span at residues 24-44; it reads WPLLVAGAAVLGLIGYMVLGN. At 45–168 the chain is on the extracellular side; it reads ANSNLVYYVL…KILNDQSTKP (124 aa). The heme site is built by His137 and Tyr141. A disordered region spans residues 145–168; that stretch reads DSKGEGQYSQDDLKKILNDQSTKP.

It belongs to the CcmE/CycJ family.

It is found in the cell membrane. Functionally, heme chaperone required for the biogenesis of c-type cytochromes. Transiently binds heme delivered by CcmC and transfers the heme to apo-cytochromes in a process facilitated by CcmF and CcmH. The chain is Cytochrome c-type biogenesis protein CcmE from Deinococcus radiodurans (strain ATCC 13939 / DSM 20539 / JCM 16871 / CCUG 27074 / LMG 4051 / NBRC 15346 / NCIMB 9279 / VKM B-1422 / R1).